A 155-amino-acid chain; its full sequence is 3-hydroxyacyl-[acyl-carrier-protein] dehydratase FabZ (155 aa).

His54 is an active-site residue.

The protein belongs to the thioester dehydratase family. FabZ subfamily.

Its subcellular location is the cytoplasm. The enzyme catalyses a (3R)-hydroxyacyl-[ACP] = a (2E)-enoyl-[ACP] + H2O. Its function is as follows. Involved in unsaturated fatty acids biosynthesis. Catalyzes the dehydration of short chain beta-hydroxyacyl-ACPs and long chain saturated and unsaturated beta-hydroxyacyl-ACPs. The polypeptide is 3-hydroxyacyl-[acyl-carrier-protein] dehydratase FabZ (Burkholderia mallei (strain NCTC 10247)).